The primary structure comprises 178 residues: MSIDSLKGQLPDFAKDVRLNLGSIANDDSLKEQTKYGLLLACALASRNAEVAAAFDREAASHLTPEARDAARAAATIMGMNNVYYRFVHLASNPVYKTMPAKLRMGVIGSPGVPKTDFELWCLAVSAINGCGMCIDAHEKVLADAGVTQEVIQTAVRFAAIVQSAAIALEAAQLPAFA.

Cysteine 131 functions as the Proton donor in the catalytic mechanism. Cysteines 131 and 134 form a disulfide. The active-site Cysteine sulfenic acid (-SOH) intermediate is cysteine 134.

It belongs to the AhpD family.

The enzyme catalyses N(6)-[(R)-dihydrolipoyl]-L-lysyl-[lipoyl-carrier protein] + a hydroperoxide = N(6)-[(R)-lipoyl]-L-lysyl-[lipoyl-carrier protein] + an alcohol + H2O. Functionally, antioxidant protein with alkyl hydroperoxidase activity. Required for the reduction of the AhpC active site cysteine residues and for the regeneration of the AhpC enzyme activity. This is Alkyl hydroperoxide reductase AhpD from Methylocella silvestris (strain DSM 15510 / CIP 108128 / LMG 27833 / NCIMB 13906 / BL2).